A 370-amino-acid chain; its full sequence is Cathepsin B-like cysteine proteinase 3 (370 aa).

The signal sequence occupies residues 1–16 (MLKVYFLALFLAGCSA). Positions 17–91 (FVLDEIRGIN…FVRGEIVPEP (75 aa)) are excised as a propeptide. Disulfide bonds link Cys105–Cys134, Cys117–Cys162, Cys153–Cys210, Cys154–Cys158, Cys190–Cys214, and Cys198–Cys202. Residue Cys120 is part of the active site. N-linked (GlcNAc...) asparagine glycosylation is present at Asn138. Residues His284 and Asn304 contribute to the active site.

The protein belongs to the peptidase C1 family.

The chain is Cathepsin B-like cysteine proteinase 3 (cpr-3) from Caenorhabditis elegans.